We begin with the raw amino-acid sequence, 444 residues long: MNLFRSLAPMGLALALLLPAAAPALAQQGPLRIQITEGVIEPLPFAVPNFVAETSGASQLAQDMARVIAADLSGTGLFREIPASAHISRVTSFDAPIAYNDWKAINAQALITGSVSASGDRVVVKFRLHDVFSDQPLGEGLQFAGSASGWRRMAHKVADVAYSRITGEGGYFDSRVVFVSETGPKNARAKRLAVMDYDGANVQYLTDSSSIVLAPRFSPTGDRILFTSYSTGFPRIYLMDVGSLATRSLAEQPGTMTFAPRFAPDGRTVAFSLEQGGNTDIYTLDTASGTRRQLTNSPSIETAPSYSPDGSQIVFESDRSGGQQLYIMPAGGGEPRRISNGAGRYGTPVWSPRGDLIAFTKQHQGRFHIGVMRTDGSEERLLTASFLDEGPTWAPNGRVLMFTREGAGAGGQPALYSVDISGRNLKKVPLSVPASDPAWSPLLP.

The N-terminal stretch at 1–26 is a signal peptide; that stretch reads MNLFRSLAPMGLALALLLPAAAPALA. Over residues 287–310 the composition is skewed to polar residues; it reads ASGTRRQLTNSPSIETAPSYSPDG. A disordered region spans residues 287–311; the sequence is ASGTRRQLTNSPSIETAPSYSPDGS.

The protein belongs to the TolB family. As to quaternary structure, the Tol-Pal system is composed of five core proteins: the inner membrane proteins TolA, TolQ and TolR, the periplasmic protein TolB and the outer membrane protein Pal. They form a network linking the inner and outer membranes and the peptidoglycan layer.

The protein localises to the periplasm. Functionally, part of the Tol-Pal system, which plays a role in outer membrane invagination during cell division and is important for maintaining outer membrane integrity. The sequence is that of Tol-Pal system protein TolB from Cereibacter sphaeroides (strain ATCC 17025 / ATH 2.4.3) (Rhodobacter sphaeroides).